A 229-amino-acid polypeptide reads, in one-letter code: Putative N-acetylmannosamine-6-phosphate 2-epimerase (229 aa).

Belongs to the NanE family.

The enzyme catalyses an N-acyl-D-glucosamine 6-phosphate = an N-acyl-D-mannosamine 6-phosphate. The protein operates within amino-sugar metabolism; N-acetylneuraminate degradation; D-fructose 6-phosphate from N-acetylneuraminate: step 3/5. Functionally, converts N-acetylmannosamine-6-phosphate (ManNAc-6-P) to N-acetylglucosamine-6-phosphate (GlcNAc-6-P). This chain is Putative N-acetylmannosamine-6-phosphate 2-epimerase, found in Escherichia coli O139:H28 (strain E24377A / ETEC).